The chain runs to 267 residues: NAD kinase 2 (267 aa).

Aspartate 52 functions as the Proton acceptor in the catalytic mechanism. NAD(+) contacts are provided by residues 52-53, 124-125, arginine 151, aspartate 153, 164-169, and alanine 188; these read DA, NE, and TAYNKS.

It belongs to the NAD kinase family. A divalent metal cation is required as a cofactor.

It localises to the cytoplasm. The enzyme catalyses NAD(+) + ATP = ADP + NADP(+) + H(+). In terms of biological role, involved in the regulation of the intracellular balance of NAD and NADP, and is a key enzyme in the biosynthesis of NADP. Catalyzes specifically the phosphorylation on 2'-hydroxyl of the adenosine moiety of NAD to yield NADP. The sequence is that of NAD kinase 2 from Bacillus cereus (strain ATCC 10987 / NRS 248).